A 236-amino-acid polypeptide reads, in one-letter code: Small ribosomal subunit protein uS3 (236 aa).

The KH type-2 domain maps to 39-112; that stretch reads IREFITKHPK…RINLKVEEVG (74 aa). The disordered stretch occupies residues 212–236; it reads YGDDNDGADAQTGQASKKPKRSYKR.

This sequence belongs to the universal ribosomal protein uS3 family. Part of the 30S ribosomal subunit. Forms a tight complex with proteins S10 and S14.

Its function is as follows. Binds the lower part of the 30S subunit head. Binds mRNA in the 70S ribosome, positioning it for translation. The sequence is that of Small ribosomal subunit protein uS3 from Rhodopirellula baltica (strain DSM 10527 / NCIMB 13988 / SH1).